We begin with the raw amino-acid sequence, 65 residues long: Large ribosomal subunit protein bL35 (65 aa).

Belongs to the bacterial ribosomal protein bL35 family.

The protein is Large ribosomal subunit protein bL35 of Xanthomonas campestris pv. campestris (strain ATCC 33913 / DSM 3586 / NCPPB 528 / LMG 568 / P 25).